Reading from the N-terminus, the 584-residue chain is uncharacterized protein (584 aa).

PbH1 repeat units follow at residues 100–128, 139–161, 173–195, 196–225, 236–266, 313–333, 334–356, 357–382, 406–427, 456–478, and 529–554; these read QENI…RSTH, CSNV…IVSP, SEQI…SITG, CDMV…DIEG, PINV…LIEG, TSDA…IDVR, GKSV…LVYQ, SSDV…GLRA, GGNM…WIAQ, NAGA…YCST, and SAGS…QTNT.

This is an uncharacterized protein from Bacillus subtilis (strain 168).